Consider the following 150-residue polypeptide: Large ribosomal subunit protein uL13 (150 aa).

Positions 127–150 (KGTEHPHSAQKPQPLQLNPSATAK) are disordered. Over residues 136 to 150 (QKPQPLQLNPSATAK) the composition is skewed to polar residues.

This sequence belongs to the universal ribosomal protein uL13 family. In terms of assembly, part of the 50S ribosomal subunit.

This protein is one of the early assembly proteins of the 50S ribosomal subunit, although it is not seen to bind rRNA by itself. It is important during the early stages of 50S assembly. The protein is Large ribosomal subunit protein uL13 of Synechococcus sp. (strain CC9902).